Reading from the N-terminus, the 463-residue chain is MADGEEPEKKRRRIEELLAEKMAVDGGCGDTGDWEGRWNHVKKFLERSGPFTHPDFEPSTESLQFLLDTCKVLVIGAGGLGCELLKNLALSGFRQIHVIDMDTIDVSNLNRQFLFRPKDIGRPKAEVAAEFLNDRVPNCNVVPHFNKIQDFNDTFYRQFHIIVCGLDSIIARRWINGMLISLLNYEDGVLDPSSIVPLIDGGTEGFKGNARVILPGMTACIECTLELYPPQVNFPMCTIASMPRLPEHCIEYVRMLQWPKEQPFGEGVPLDGDDPEHIQWIFQKSLERASQYNIRGVTYRLTQGVVKRIIPAVASTNAVIAAVCATEVFKIATSAYIPLNNYLVFNDVDGLYTYTFEAERKENCPACSQLPQNIQFSPSAKLQEVLDYLTNSASLQMKSPAITATLEGKNRTLYLQSVTSIEERTRPNLSKTLKELGLVDGQELAVADVTTPQTVLFKLHFTS.

A2 carries the post-translational modification N-acetylalanine. The interval 53-70 (HPDFEPSTESLQFLLDTC) is interaction with UBE2M N-terminus. Residues 100–124 (DMDT…GRPK) and 148–171 (IQDF…SIIA) each bind ATP. Interaction with UBE2M N-terminus stretches follow at residues 157 to 161 (RQFHI) and 192 to 217 (PSSI…LPGM). The tract at residues 227 to 229 (LYP) is interaction with NEDD8. The Glycyl thioester intermediate role is filled by C237. 2 interaction with NAE1 regions span residues 242–248 (MPRLPEH) and 292–295 (YNIR). An interaction with UBE2M N-terminus region spans residues 331-338 (IATSAYIP). The interaction with NEDD8 stretch occupies residues 352 to 357 (YTYTFE). Residues 368–463 (SQLPQNIQFS…TVLFKLHFTS (96 aa)) are interaction with UBE2M core domain.

It belongs to the ubiquitin-activating E1 family. UBA3 subfamily. Heterodimer of UBA3 and NAE1. Interacts with NEDD8, UBE2F and UBE2M. Binds ESR1 and ESR2 with bound steroid ligand. Interacts with TBATA. Ubiquitously expressed.

It catalyses the reaction ATP + [NEDD8 protein] + [E1 NEDD8-activating enzyme]-L-cysteine = AMP + diphosphate + [E1 NEDD8-activating enzyme]-S-[NEDD8 protein]-yl-L-cysteine.. Its pathway is protein modification; protein neddylation. With respect to regulation, binding of TP53BP2 to the regulatory subunit NAE1 decreases activity. Its function is as follows. Catalytic subunit of the dimeric UBA3-NAE1 E1 enzyme. E1 activates NEDD8 by first adenylating its C-terminal glycine residue with ATP, thereafter linking this residue to the side chain of the catalytic cysteine, yielding a NEDD8-UBA3 thioester and free AMP. E1 finally transfers NEDD8 to the catalytic cysteine of UBE2M. Down-regulates steroid receptor activity. Necessary for cell cycle progression. The chain is NEDD8-activating enzyme E1 catalytic subunit (UBA3) from Homo sapiens (Human).